A 232-amino-acid polypeptide reads, in one-letter code: Large ribosomal subunit protein uL1 (232 aa).

The protein belongs to the universal ribosomal protein uL1 family. Part of the 50S ribosomal subunit.

Binds directly to 23S rRNA. The L1 stalk is quite mobile in the ribosome, and is involved in E site tRNA release. Its function is as follows. Protein L1 is also a translational repressor protein, it controls the translation of the L11 operon by binding to its mRNA. The protein is Large ribosomal subunit protein uL1 of Rhizorhabdus wittichii (strain DSM 6014 / CCUG 31198 / JCM 15750 / NBRC 105917 / EY 4224 / RW1) (Sphingomonas wittichii).